A 165-amino-acid chain; its full sequence is Chorismate pyruvate-lyase (165 aa).

Substrate-binding residues include M35, R77, L115, and E156.

The protein belongs to the UbiC family. Monomer.

Its subcellular location is the cytoplasm. The catalysed reaction is chorismate = 4-hydroxybenzoate + pyruvate. The protein operates within cofactor biosynthesis; ubiquinone biosynthesis. Functionally, removes the pyruvyl group from chorismate, with concomitant aromatization of the ring, to provide 4-hydroxybenzoate (4HB) for the ubiquinone pathway. This chain is Chorismate pyruvate-lyase, found in Shigella dysenteriae serotype 1 (strain Sd197).